A 370-amino-acid chain; its full sequence is ATP synthase gamma chain, chloroplastic (370 aa).

A chloroplast-targeting transit peptide spans 1–55; that stretch reads MKFFCVAGLLASAAAFQAQPAAFTTYSPAVGGATSNVFSESSSPAHRNRRATIVM. C145 is an active-site residue.

This sequence belongs to the ATPase gamma chain family. In terms of assembly, F-type ATPases have 2 components, CF(1) - the catalytic core - and CF(0) - the membrane proton channel. CF(1) has five subunits: alpha(3), beta(3), gamma(1), delta(1), epsilon(1). CF(0) has four main subunits: a, b, b' and c.

The protein localises to the plastid. The protein resides in the chloroplast thylakoid membrane. In terms of biological role, produces ATP from ADP in the presence of a proton gradient across the membrane. The gamma chain is believed to be important in regulating ATPase activity and the flow of protons through the CF(0) complex. The chain is ATP synthase gamma chain, chloroplastic (ATPC) from Trieres chinensis (Marine centric diatom).